The primary structure comprises 357 residues: MNSKFADELIATAKAIVAPGKGILAADESTNTIGARFKKINLENNEENRRAYRELLIGTGNGVNEFIGGIILYEETLYQKMADGRLFTDVLREQKIHIGIKVDKGVVPIPGTDGETSTQGLDGLAERCKKYYEAGARFAKWRAVLKIDLAKNCPSQLSITENAHTLARYAAICQENGLVPIVEPEILMDGNHTVEQSAEVTEKVLAAVFKALNDHHILLEGALLKPNMVVNGTDCPIKATSEQIGKFTVRTLQRTVPPALTGVVFLSGGQTEIEATANLNAMNVLPNRPWALSFSYGRALQASVISTWKGESANVEAARKVYLHRAKCNSLAQLGKYTGEESTGSASESLYVKDYKY.

Substrate-binding residues include R49 and K140. Catalysis depends on E183, which acts as the Proton acceptor. K225 (schiff-base intermediate with dihydroxyacetone-P) is an active-site residue.

Belongs to the class I fructose-bisphosphate aldolase family.

The catalysed reaction is beta-D-fructose 1,6-bisphosphate = D-glyceraldehyde 3-phosphate + dihydroxyacetone phosphate. It participates in carbohydrate degradation; glycolysis; D-glyceraldehyde 3-phosphate and glycerone phosphate from D-glucose: step 4/4. This chain is Fructose-bisphosphate aldolase (fba), found in Dictyostelium discoideum (Social amoeba).